An 84-amino-acid chain; its full sequence is Large ribosomal subunit protein bL27 (84 aa).

Residues 1–23 (MAHKKGASSSRNGRESAAQRLGV) are disordered.

It belongs to the bacterial ribosomal protein bL27 family.

This chain is Large ribosomal subunit protein bL27, found in Salinispora arenicola (strain CNS-205).